Reading from the N-terminus, the 303-residue chain is Probable endonuclease 4 (303 aa).

Zn(2+)-binding residues include His-75, His-115, Glu-151, Asp-185, His-188, His-221, Asp-234, His-236, and Glu-266.

The protein belongs to the AP endonuclease 2 family. Requires Zn(2+) as cofactor.

The catalysed reaction is Endonucleolytic cleavage to 5'-phosphooligonucleotide end-products.. Its function is as follows. Endonuclease IV plays a role in DNA repair. It cleaves phosphodiester bonds at apurinic or apyrimidinic (AP) sites, generating a 3'-hydroxyl group and a 5'-terminal sugar phosphate. This Ureaplasma parvum serovar 3 (strain ATCC 700970) protein is Probable endonuclease 4.